We begin with the raw amino-acid sequence, 324 residues long: Olfactory receptor 52I1 (324 aa).

At 1–29 (MLGPAYNHTMETPASFLLVGIPGLQSSHL) the chain is on the extracellular side. Residue Asn7 is glycosylated (N-linked (GlcNAc...) asparagine). A helical membrane pass occupies residues 30–50 (WLAISLSAMYITALLGNTLIV). Residues 51 to 58 (TAIWMDST) are Cytoplasmic-facing. A helical membrane pass occupies residues 59-79 (RHEPMYCFLCVLAAVDIVMAS). Topologically, residues 80 to 103 (SVVPKMVSIFCSGDSSISFSACFT) are extracellular. Cysteines 101 and 193 form a disulfide. The helical transmembrane segment at 104–124 (QMFFVHLATAVETGLLLTMAF) threads the bilayer. Topologically, residues 125–143 (DRYVAICKPLHYKRILTPQ) are cytoplasmic. A helical membrane pass occupies residues 144–164 (VMLGMSMAVTIRAVTFMTPLS). Residues 165–200 (WMMNHLPFCGSNVVVHSYCKHIALARLACADPVPSS) lie on the Extracellular side of the membrane. A helical transmembrane segment spans residues 201–221 (LYSLIGSSLMVGSDVAFIAAS). At 222–241 (YILILRAVFDLSSKTAQLKA) the chain is on the cytoplasmic side. A helical membrane pass occupies residues 242–262 (LSTCGSHVGVMALYYLPGMAS). The Extracellular portion of the chain corresponds to 263–278 (IYAAWLGQDIVPLHTQ). The helical transmembrane segment at 279–299 (VLLADLYVIIPATLNPIIYGM) threads the bilayer. Over 300 to 324 (RTKQLLEGIWSYLMHFLFDHSNLGS) the chain is Cytoplasmic.

The protein belongs to the G-protein coupled receptor 1 family.

The protein resides in the cell membrane. In terms of biological role, odorant receptor. In Homo sapiens (Human), this protein is Olfactory receptor 52I1 (OR52I1).